Here is a 320-residue protein sequence, read N- to C-terminus: Mechanosensory protein 3 (320 aa).

LIM zinc-binding domains are found at residues 29–79 (CNCC…CSQH) and 89–145 (CAGC…CMTH). Positions 216–275 (RRGPRTTIKQNQLDVLNEMFSNTPKPSKHARAKKALETGLSMRVIQVWFQNRRSKERRLK) form a DNA-binding region, homeobox.

The protein localises to the nucleus. Its function is as follows. Specifies differentiation of the set of six touch receptor neurons. Binds cooperatively as a heterodimer with unc-86 to sites in the mec-3 gene promoter. The protein is Mechanosensory protein 3 (mec-3) of Caenorhabditis remanei (Caenorhabditis vulgaris).